A 335-amino-acid polypeptide reads, in one-letter code: Fructose-1,6-bisphosphatase class 1 (335 aa).

4 residues coordinate Mg(2+): E90, D113, L115, and D116. Substrate-binding positions include 116–119 (DGSS), N209, Y242, and K272. Position 278 (E278) interacts with Mg(2+).

Belongs to the FBPase class 1 family. In terms of assembly, homotetramer. Requires Mg(2+) as cofactor.

Its subcellular location is the cytoplasm. The catalysed reaction is beta-D-fructose 1,6-bisphosphate + H2O = beta-D-fructose 6-phosphate + phosphate. It participates in carbohydrate biosynthesis; gluconeogenesis. This is Fructose-1,6-bisphosphatase class 1 from Histophilus somni (strain 2336) (Haemophilus somnus).